Here is a 4299-residue protein sequence, read N- to C-terminus: DNA-dependent protein kinase catalytic subunit (4299 aa).

Residues 551–590 (KDLNSTIKKENNNNNNNKNKNNNNNQTLTKEEISKSIKKL) adopt a coiled-coil conformation. 4 disordered regions span residues 557-577 (IKKENNNNNNNKNKNNNNNQT), 613-633 (DENDNNSNSNSNNNNNNDQDN), 878-917 (NSSDSTSGGDIDIDSGGSMGGGGVVPPPSSSSRHRKMKFK), and 1206-1230 (SSSKNNSNSNSNNNNNNNNNSEDGT). Low complexity-rich tracts occupy residues 562–575 (NNNNNNKNKNNNNN), 617–631 (NNSNSNSNNNNNNDQ), 878–893 (NSSDSTSGGDIDIDSG), and 1206–1226 (SSSKNNSNSNSNNNNNNNNNS). At Ser2789 the chain carries Phosphoserine; by autocatalysis. Phosphothreonine; by autocatalysis occurs at positions 2814 and 2822. Over residues 2832–2867 (SSSQSYGGTNNNTGSSQLSSSSSSSGSQSSSQNNSS) the composition is skewed to low complexity. 2 disordered regions span residues 2832–2881 (SSSQ…PKLI) and 3535–3559 (TTSSSPSLSISSSSSPYSSTSSSSQ). The 677-residue stretch at 3031 to 3707 (KIKDISLNSN…YFPFKISSEQ (677 aa)) folds into the FAT domain. Positions 3887–4226 (FDTNVLVMGS…AKKKLELVNP (340 aa)) constitute a PI3K/PI4K catalytic domain. The G-loop stretch occupies residues 3893 to 3899 (VMGSLRK). The tract at residues 4092-4100 (GIGDRHLEN) is catalytic loop. Residues 4112–4137 (GIDFGHAFGTATQFLPIPELMPFRLT) are activation loop. The FATC domain occupies 4267-4299 (VCSSVKEQIDCLIDQSTDPNILSRAWVGWNGAL).

Belongs to the PI3/PI4-kinase family. DNAPK subfamily. Post-translationally, may be phosphorylated upon DNA damage. Could be autophosphorylated. Autophosphorylation induces a conformational change that leads to remodeling of the DNA-PK complex, requisite for efficient end processing and DNA repair. In terms of processing, autophosphorylated on Ser-2789, Thr-2814 and Thr-2822. Ser-2789 is a DNA damage-inducible phosphorylation site (inducible with ionizing radiation, IR).

It localises to the nucleus. The protein localises to the nucleolus. The enzyme catalyses L-seryl-[protein] + ATP = O-phospho-L-seryl-[protein] + ADP + H(+). It carries out the reaction L-threonyl-[protein] + ATP = O-phospho-L-threonyl-[protein] + ADP + H(+). With respect to regulation, inhibited by wortmannin. Activity of the enzyme seems to be attenuated by autophosphorylation. Functionally, serine/threonine-protein kinase that acts as a molecular sensor for DNA damage. Is recruited to DNA ends by the Ku70/Ku80 heterodimer and is involved in DNA non-homologous end joining (NHEJ) required for double-strand break (DSB) repair and V(D)J recombination. This activity is only apparent when DNA damage is administered in G1 phase of the cell cycle. Required for efficient signaling of DNA double-stranded breaks via phosphorylation of H2AX during G1. The chain is DNA-dependent protein kinase catalytic subunit (dnapkcs) from Dictyostelium discoideum (Social amoeba).